A 770-amino-acid polypeptide reads, in one-letter code: Molybdenum cofactor sulfurase (770 aa).

Lys231 bears the N6-(pyridoxal phosphate)lysine mark. Residue Cys395 is part of the active site. Residues 601 to 770 (DWVSRALGVS…TVSGVIEESE (170 aa)) enclose the MOSC domain.

This sequence belongs to the class-V pyridoxal-phosphate-dependent aminotransferase family. MOCOS subfamily. Pyridoxal 5'-phosphate serves as cofactor.

It catalyses the reaction Mo-molybdopterin + L-cysteine + AH2 = thio-Mo-molybdopterin + L-alanine + A + H2O. Functionally, sulfurates the molybdenum cofactor. Sulfation of molybdenum is essential for xanthine dehydrogenase (XDH) and aldehyde oxidase (ADO) enzymes in which molybdenum cofactor is liganded by 1 oxygen and 1 sulfur atom in active form. The sequence is that of Molybdenum cofactor sulfurase from Anopheles gambiae (African malaria mosquito).